The following is a 418-amino-acid chain: Serine hydroxymethyltransferase (418 aa).

Residues leucine 120 and 124–126 contribute to the (6S)-5,6,7,8-tetrahydrofolate site; that span reads GHL. Lysine 229 carries the post-translational modification N6-(pyridoxal phosphate)lysine. (6S)-5,6,7,8-tetrahydrofolate is bound at residue 353–355; it reads SPF.

The protein belongs to the SHMT family. In terms of assembly, homodimer. It depends on pyridoxal 5'-phosphate as a cofactor.

Its subcellular location is the cytoplasm. It carries out the reaction (6R)-5,10-methylene-5,6,7,8-tetrahydrofolate + glycine + H2O = (6S)-5,6,7,8-tetrahydrofolate + L-serine. The protein operates within one-carbon metabolism; tetrahydrofolate interconversion. It functions in the pathway amino-acid biosynthesis; glycine biosynthesis; glycine from L-serine: step 1/1. Catalyzes the reversible interconversion of serine and glycine with tetrahydrofolate (THF) serving as the one-carbon carrier. This reaction serves as the major source of one-carbon groups required for the biosynthesis of purines, thymidylate, methionine, and other important biomolecules. Also exhibits THF-independent aldolase activity toward beta-hydroxyamino acids, producing glycine and aldehydes, via a retro-aldol mechanism. The chain is Serine hydroxymethyltransferase from Psychrobacter arcticus (strain DSM 17307 / VKM B-2377 / 273-4).